A 71-amino-acid polypeptide reads, in one-letter code: MLLYPSVDDLLAQVDSRYSLIMLASKRAHELDAGSKPLLTDYKSPKTIGRALEEIAAGALMIDPDEKDLDA.

Belongs to the RNA polymerase subunit omega family. The RNAP catalytic core consists of 2 alpha, 1 beta, 1 beta' and 1 omega subunit. When a sigma factor is associated with the core the holoenzyme is formed, which can initiate transcription.

The enzyme catalyses RNA(n) + a ribonucleoside 5'-triphosphate = RNA(n+1) + diphosphate. In terms of biological role, promotes RNA polymerase assembly. Latches the N- and C-terminal regions of the beta' subunit thereby facilitating its interaction with the beta and alpha subunits. The sequence is that of DNA-directed RNA polymerase subunit omega from Levilactobacillus brevis (strain ATCC 367 / BCRC 12310 / CIP 105137 / JCM 1170 / LMG 11437 / NCIMB 947 / NCTC 947) (Lactobacillus brevis).